A 317-amino-acid chain; its full sequence is tRNA dimethylallyltransferase (317 aa).

Position 14–21 (14–21) interacts with ATP; it reads GPTAVGKT. 16–21 lines the substrate pocket; it reads TAVGKT. The interaction with substrate tRNA stretch occupies residues 39–42; the sequence is DSMQ.

This sequence belongs to the IPP transferase family. In terms of assembly, monomer. Mg(2+) serves as cofactor.

The catalysed reaction is adenosine(37) in tRNA + dimethylallyl diphosphate = N(6)-dimethylallyladenosine(37) in tRNA + diphosphate. Catalyzes the transfer of a dimethylallyl group onto the adenine at position 37 in tRNAs that read codons beginning with uridine, leading to the formation of N6-(dimethylallyl)adenosine (i(6)A). The sequence is that of tRNA dimethylallyltransferase from Bacillus cereus (strain Q1).